The sequence spans 87 residues: Signal recognition particle 19 kDa protein (87 aa).

This sequence belongs to the SRP19 family. As to quaternary structure, part of the signal recognition particle protein translocation system, which is composed of SRP and FtsY. Archaeal SRP consists of a 7S RNA molecule of 300 nucleotides and two protein subunits: SRP54 and SRP19.

It is found in the cytoplasm. Involved in targeting and insertion of nascent membrane proteins into the cytoplasmic membrane. Binds directly to 7S RNA and mediates binding of the 54 kDa subunit of the SRP. The protein is Signal recognition particle 19 kDa protein of Methanocaldococcus jannaschii (strain ATCC 43067 / DSM 2661 / JAL-1 / JCM 10045 / NBRC 100440) (Methanococcus jannaschii).